The following is a 355-amino-acid chain: UDP-N-acetylglucosamine--N-acetylmuramyl-(pentapeptide) pyrophosphoryl-undecaprenol N-acetylglucosamine transferase (355 aa).

UDP-N-acetyl-alpha-D-glucosamine-binding positions include threonine 11–glycine 13, asparagine 120, arginine 161, serine 188, and glutamine 280.

It belongs to the glycosyltransferase 28 family. MurG subfamily.

It localises to the cell inner membrane. The catalysed reaction is di-trans,octa-cis-undecaprenyl diphospho-N-acetyl-alpha-D-muramoyl-L-alanyl-D-glutamyl-meso-2,6-diaminopimeloyl-D-alanyl-D-alanine + UDP-N-acetyl-alpha-D-glucosamine = di-trans,octa-cis-undecaprenyl diphospho-[N-acetyl-alpha-D-glucosaminyl-(1-&gt;4)]-N-acetyl-alpha-D-muramoyl-L-alanyl-D-glutamyl-meso-2,6-diaminopimeloyl-D-alanyl-D-alanine + UDP + H(+). Its pathway is cell wall biogenesis; peptidoglycan biosynthesis. In terms of biological role, cell wall formation. Catalyzes the transfer of a GlcNAc subunit on undecaprenyl-pyrophosphoryl-MurNAc-pentapeptide (lipid intermediate I) to form undecaprenyl-pyrophosphoryl-MurNAc-(pentapeptide)GlcNAc (lipid intermediate II). This Prochlorococcus marinus (strain MIT 9211) protein is UDP-N-acetylglucosamine--N-acetylmuramyl-(pentapeptide) pyrophosphoryl-undecaprenol N-acetylglucosamine transferase.